The following is a 302-amino-acid chain: Adipolin (302 aa).

The signal sequence occupies residues 1–20 (MRRWAWAAVVVLLGPQLVLL). Disordered stretches follow at residues 28–68 (EAQR…GPEF) and 86–110 (ALRKRCGSRDKKPRDLFGPPGPPGA). A glycan (N-linked (GlcNAc...) asparagine) is linked at Asn43. A compositionally biased stretch (basic and acidic residues) spans 86–100 (ALRKRCGSRDKKPRD). Residues 147-302 (LRLVGEAFHC…SSFSGLLLGT (156 aa)) enclose the C1q domain.

Belongs to the adipolin/erythroferrone family. In terms of assembly, homomultimer; disulfide-linked. May interact with ERFE. Post-translationally, processed into Adipolin fC1QTNF12 and Adipolin gC1QTNF12 by FURIN. Insulin enhances endogenous C1QTNF12 cleavage. In terms of tissue distribution, predominantly expressed by adipose tissues.

Its subcellular location is the secreted. Insulin-sensitizing adipocyte-secreted protein (adipokine) that regulates glucose metabolism in liver and adipose tissue. Promotes glucose uptake in adipocytes and suppresses de novo glucose production in hepatocytes via the PI3K-Akt signaling pathway. Administration lead to reduction of blood glucose. Able to attenuate inflammation in fat tissue. This is Adipolin from Homo sapiens (Human).